Reading from the N-terminus, the 305-residue chain is Oligopeptide transport system permease protein OppC (305 aa).

6 helical membrane passes run 43-63 (AMVG…APMF), 105-125 (ISIF…VIWG), 166-185 (LFTI…ARIV), 212-232 (LFKH…TLTV), 236-256 (IFTE…LASW), and 274-294 (LFFP…VGDG). The ABC transmembrane type-1 domain maps to 103–292 (ARISIFIGVA…ITMFGFNVVG (190 aa)).

It belongs to the binding-protein-dependent transport system permease family. OppBC subfamily. As to quaternary structure, the complex is composed of two ATP-binding proteins (OppD and OppF), two transmembrane proteins (OppB and OppC) and a solute-binding protein (OppA).

It localises to the cell membrane. In terms of biological role, part of the ABC transporter complex OppABCDF involved in the uptake of oligopeptides. Probably responsible for the translocation of the substrate across the membrane. Required for sporulation and genetic competence. The protein is Oligopeptide transport system permease protein OppC of Bacillus subtilis (strain 168).